A 382-amino-acid polypeptide reads, in one-letter code: MWIENLPNGKYKYFERYRDPLTEKLKKVSVTLDKKTPRAQKVAQAELLEKIESKINNSSTSNAKFTDIAEEWWSFYKKSIKQSSISALQSSFNFIIDYFDKEIKISNVTSKVIQKFINDADCPRSKLERSKSTLNLIFDYAVDLEYIEYNPARKAKLPKKIQTVKDLEKIQNKYLEQNELKALLSELYSRPNTRRLALLAEFMSLNGCRMGEAIALKKENYKRSERKIDIHGTLDKTVGYSKGVKTTPKTASSFRTVDLSDREIEILDEIIEQNNLSKSVINDYNEMGYIFVSKRGIPLQTNSFNLAIKRANSRLKSPINKNLSSHIFRHTLISYLAENNVPLKAIVDRVGHKDGGKTTTAIYTHVTENMKSSIIDILNKKN.

Positions 63-142 (AKFTDIAEEW…TLNLIFDYAV (80 aa)) constitute a Core-binding (CB) domain. The Tyr recombinase domain occupies 170 to 376 (IQNKYLEQNE…TENMKSSIID (207 aa)). Active-site residues include arginine 209, lysine 242, histidine 326, arginine 329, and histidine 352. Tyrosine 363 functions as the O-(3'-phospho-DNA)-tyrosine intermediate in the catalytic mechanism.

This sequence belongs to the 'phage' integrase family.

The sequence is that of Prophage ps2 probable integrase (ps201) from Lactococcus lactis subsp. lactis (strain IL1403) (Streptococcus lactis).